The primary structure comprises 458 residues: Probable threonine--tRNA ligase, cytoplasmic (458 aa).

In terms of domain architecture, TGS spans 41–104 (DPIKITLLPD…EGDCSLEIFG (64 aa)).

The protein belongs to the class-II aminoacyl-tRNA synthetase family.

The protein localises to the cytoplasm. It catalyses the reaction tRNA(Thr) + L-threonine + ATP = L-threonyl-tRNA(Thr) + AMP + diphosphate + H(+). The protein is Probable threonine--tRNA ligase, cytoplasmic of Arabidopsis thaliana (Mouse-ear cress).